Reading from the N-terminus, the 100-residue chain is Large ribosomal subunit protein uL23 (100 aa).

It belongs to the universal ribosomal protein uL23 family. In terms of assembly, part of the 50S ribosomal subunit. Contacts protein L29, and trigger factor when it is bound to the ribosome.

In terms of biological role, one of the early assembly proteins it binds 23S rRNA. One of the proteins that surrounds the polypeptide exit tunnel on the outside of the ribosome. Forms the main docking site for trigger factor binding to the ribosome. This is Large ribosomal subunit protein uL23 from Vibrio atlanticus (strain LGP32) (Vibrio splendidus (strain Mel32)).